The chain runs to 295 residues: tRNA pseudouridine synthase B (295 aa).

The Nucleophile role is filled by aspartate 42.

Belongs to the pseudouridine synthase TruB family. Type 1 subfamily.

It carries out the reaction uridine(55) in tRNA = pseudouridine(55) in tRNA. In terms of biological role, responsible for synthesis of pseudouridine from uracil-55 in the psi GC loop of transfer RNAs. The protein is tRNA pseudouridine synthase B of Cutibacterium acnes (strain DSM 16379 / KPA171202) (Propionibacterium acnes).